The chain runs to 184 residues: Large ribosomal subunit protein uL6 (184 aa).

This sequence belongs to the universal ribosomal protein uL6 family. Part of the 50S ribosomal subunit.

This protein binds to the 23S rRNA, and is important in its secondary structure. It is located near the subunit interface in the base of the L7/L12 stalk, and near the tRNA binding site of the peptidyltransferase center. This Mycoplasma pneumoniae (strain ATCC 29342 / M129 / Subtype 1) (Mycoplasmoides pneumoniae) protein is Large ribosomal subunit protein uL6.